The chain runs to 223 residues: Putative lipoprotein NMB1126/NMB1164 (223 aa).

The N-terminal stretch at M1–G19 is a signal peptide. C20 is lipidated: N-palmitoyl cysteine. Residue C20 is the site of S-diacylglycerol cysteine attachment.

The protein localises to the cell membrane. This chain is Putative lipoprotein NMB1126/NMB1164, found in Neisseria meningitidis serogroup B (strain ATCC BAA-335 / MC58).